A 553-amino-acid polypeptide reads, in one-letter code: Putative transport protein YidE (553 aa).

A run of 5 helical transmembrane segments spans residues 4 to 24 (IALT…IGNV), 28 to 48 (GIGL…HFVS), 65 to 85 (FGLI…FFAS), 95 to 115 (LFAV…HKLF), and 158 to 178 (MSYA…MWML). RCK C-terminal domains follow at residues 191 to 276 (QQHE…VIGQ) and 279 to 361 (DTSL…VLGN). Helical transmembrane passes span 371-391 (MLPV…PVFV), 393-413 (GFPA…ALIL), 439-459 (IVLF…NTLV), 464-484 (LSWI…VGIL), 493-513 (YLTM…LAFA), and 533-553 (LVMF…WSIG).

The protein belongs to the AAE transporter (TC 2.A.81) family. YidE subfamily.

It is found in the cell membrane. The sequence is that of Putative transport protein YidE from Shigella flexneri serotype 5b (strain 8401).